Here is a 92-residue protein sequence, read N- to C-terminus: SPbeta prophage-derived DNA-binding protein HU 2 (92 aa).

Threonine 4 is modified (phosphothreonine). Residues 55–77 (RAARKGRNPQTGEEIDIPATKAP) form a disordered region.

This sequence belongs to the bacterial histone-like protein family. Homodimer.

In terms of biological role, histone-like DNA-binding protein which is capable of wrapping DNA to stabilize it, and thus to prevent its denaturation under extreme environmental conditions. This chain is SPbeta prophage-derived DNA-binding protein HU 2 (hup2), found in Bacillus subtilis (strain 168).